The chain runs to 585 residues: Frizzled-5 (585 aa).

Residues 1-26 (MARPDPSAPPSLLLLLLAQLVGRAAA) form the signal peptide. Residues 27–238 (ASKAPVCQEI…PDERTFATFW (212 aa)) lie on the Extracellular side of the membrane. The 123-residue stretch at 28 to 150 (SKAPVCQEIT…GDAEVLCMDY (123 aa)) folds into the FZ domain. 5 disulfide bridges follow: Cys33/Cys94, Cys41/Cys87, Cys78/Cys116, Cys105/Cys147, and Cys109/Cys133. Residue Asn47 is glycosylated (N-linked (GlcNAc...) asparagine). An N-linked (GlcNAc...) asparagine glycan is attached at Asn151. A disordered region spans residues 156–182 (TTASPKSFPAKPTLPGPPGAPSSGGEC). A helical membrane pass occupies residues 239–259 (IGLWSVLCFISTSTTVATFLI). The Cytoplasmic segment spans residues 260-270 (DMERFRYPERP). The helical transmembrane segment at 271–291 (IIFLSACYLCVSLGFLVRLVV) threads the bilayer. Over 292-315 (GHASVACSREHSHIHYETTGPALC) the chain is Extracellular. Residues 316–336 (TVVFLLVYFFGMASSIWWVIL) form a helical membrane-spanning segment. At 337-358 (SLTWFLAAGMKWGNEAIAGYAQ) the chain is on the cytoplasmic side. The chain crosses the membrane as a helical span at residues 359 to 379 (YFHLAAWLIPSVKSITALALS). At 380 to 402 (SVDGDPVAGICYVGNQNLNSLRG) the chain is on the extracellular side. A helical membrane pass occupies residues 403–423 (FVLGPLVLYLLVGTLFLLAGF). Topologically, residues 424-449 (VSLFRIRSVIKQGGTKTDKLEKLMIR) are cytoplasmic. The helical transmembrane segment at 450 to 470 (IGIFTLLYTVPASIVVACYLY) threads the bilayer. The Extracellular portion of the chain corresponds to 471-500 (EQHYRESWEAALTCACPGPDAGQPRAKPEY). The chain crosses the membrane as a helical span at residues 501–521 (WVLMLKYFMCLVVGITSGVWI). At 522-585 (WSGKTLESWR…YHKQVSLSHV (64 aa)) the chain is on the cytoplasmic side. Residues 582 to 584 (LSH) carry the PDZ-binding motif.

It belongs to the G-protein coupled receptor Fz/Smo family. As to quaternary structure, binding of unsaturated fatty acid molecules (via FZ domain) promotes homodimerization (via FZ domain). Interacts with WNT2B. Interacts with WNT7A. Interacts with GOPC. Post-translationally, ubiquitinated by RNF43 and ZNRF3, leading to its degradation by the proteasome. As to expression, detected in hippocampus (at protein level). Expressed in eye, kidney, lung, chondrocytes, epithelial cells of the small intestine and gobelet cells of the colon.

Its subcellular location is the cell membrane. It is found in the golgi apparatus membrane. It localises to the synapse. The protein resides in the perikaryon. The protein localises to the cell projection. Its subcellular location is the dendrite. It is found in the axon. Its function is as follows. Receptor for Wnt proteins. Functions in the canonical Wnt/beta-catenin signaling pathway. In vitro activates WNT2, WNT10B, WNT5A, but not WNT2B or WNT4 signaling. In neurons, activation by WNT7A promotes formation of synapses. May be involved in transduction and intercellular transmission of polarity information during tissue morphogenesis and/or in differentiated tissues. Plays a role in yolk sac angiogenesis and in placental vascularization. Plays a role in ocular development. The protein is Frizzled-5 (Fzd5) of Mus musculus (Mouse).